A 363-amino-acid chain; its full sequence is Phosphoserine aminotransferase (363 aa).

Arg-42 is an L-glutamate binding site. Pyridoxal 5'-phosphate-binding positions include 76–77, Trp-102, Thr-156, Asp-175, and Gln-198; that span reads GR. Residue Lys-199 is modified to N6-(pyridoxal phosphate)lysine. A pyridoxal 5'-phosphate-binding site is contributed by 240 to 241; sequence NT.

It belongs to the class-V pyridoxal-phosphate-dependent aminotransferase family. SerC subfamily. Homodimer. Pyridoxal 5'-phosphate serves as cofactor.

It is found in the cytoplasm. It catalyses the reaction O-phospho-L-serine + 2-oxoglutarate = 3-phosphooxypyruvate + L-glutamate. It carries out the reaction 4-(phosphooxy)-L-threonine + 2-oxoglutarate = (R)-3-hydroxy-2-oxo-4-phosphooxybutanoate + L-glutamate. The protein operates within amino-acid biosynthesis; L-serine biosynthesis; L-serine from 3-phospho-D-glycerate: step 2/3. Its pathway is cofactor biosynthesis; pyridoxine 5'-phosphate biosynthesis; pyridoxine 5'-phosphate from D-erythrose 4-phosphate: step 3/5. Functionally, catalyzes the reversible conversion of 3-phosphohydroxypyruvate to phosphoserine and of 3-hydroxy-2-oxo-4-phosphonooxybutanoate to phosphohydroxythreonine. This chain is Phosphoserine aminotransferase, found in Shewanella baltica (strain OS223).